Consider the following 80-residue polypeptide: Omega-conotoxin-like PuIA (80 aa).

The first 22 residues, 1-22 (MKLTCVMIVAVLFLTAWTFVTA), serve as a signal peptide directing secretion. Positions 23–50 (DSIRALEDLFAKAPDEMENSGASPLNER) are excised as a propeptide. Cystine bridges form between cysteine 52-cysteine 70, cysteine 59-cysteine 74, and cysteine 69-cysteine 78.

This sequence belongs to the conotoxin O1 superfamily. Expressed by the venom duct.

It is found in the secreted. Functionally, omega-conotoxins act at presynaptic membranes, they bind and block voltage-gated calcium channels (Cav). This Conus pulicarius (Flea-bitten cone) protein is Omega-conotoxin-like PuIA.